The primary structure comprises 361 residues: Porphobilinogen deaminase (361 aa).

S2 carries the post-translational modification N-acetylserine. S69 is subject to Phosphoserine. At K74 the chain carries N6-acetyllysine. Phosphoserine is present on S147. An S-(dipyrrolylmethanemethyl)cysteine modification is found at C261.

The protein belongs to the HMBS family. In terms of assembly, monomer. It depends on dipyrromethane as a cofactor.

The protein resides in the cytoplasm. Its subcellular location is the cytosol. The enzyme catalyses 4 porphobilinogen + H2O = hydroxymethylbilane + 4 NH4(+). It participates in porphyrin-containing compound metabolism; protoporphyrin-IX biosynthesis; coproporphyrinogen-III from 5-aminolevulinate: step 2/4. Functionally, as part of the heme biosynthetic pathway, catalyzes the sequential polymerization of four molecules of porphobilinogen to form hydroxymethylbilane, also known as preuroporphyrinogen. Catalysis begins with the assembly of the dipyrromethane cofactor by the apoenzyme from two molecules of porphobilinogen or from preuroporphyrinogen. The covalently linked cofactor acts as a primer, around which the tetrapyrrole product is assembled. In the last step of catalysis, the product, preuroporphyrinogen, is released, leaving the cofactor bound to the holodeaminase intact. This is Porphobilinogen deaminase (HMBS) from Bos taurus (Bovine).